A 798-amino-acid polypeptide reads, in one-letter code: Vacuolar protein sorting-associated protein 53 homolog (798 aa).

It belongs to the VPS53 family. As to quaternary structure, component of the Golgi-associated retrograde protein (GARP) complex, also called VFT (VPS fifty-three) complex, composed of vps-51, vps-52, vps-53 and vps-54. Within the complex interacts with vps-51, vps-52 and vps-54. In terms of tissue distribution, ubiquitously expressed, with particularly strong expression in neuronal cells. Specifically expressed in head and tail neurons and in the pharynx and ventral cord motor neurons.

Its subcellular location is the golgi apparatus. The protein localises to the trans-Golgi network membrane. It localises to the endosome membrane. It is found in the perikaryon. The protein resides in the cytoplasm. Its subcellular location is the perinuclear region. In terms of biological role, acts as a component of the GARP complex that is involved in retrograde transport from early and late endosomes to the trans-Golgi network (TGN). The GARP complex facilitates tethering as well as SNARE complex assembly at the Golgi. Plays a role in the trafficking of cargo to dense-core vesicles, probably through association with the EARP-interacting protein eipr-1. Important for neuronal function. The chain is Vacuolar protein sorting-associated protein 53 homolog from Caenorhabditis elegans.